A 341-amino-acid polypeptide reads, in one-letter code: Uroporphyrinogen decarboxylase (341 aa).

Residues 23-27 (RQAGR), Phe42, Asp73, Tyr148, Ser203, and His318 each bind substrate.

This sequence belongs to the uroporphyrinogen decarboxylase family. Homodimer.

Its subcellular location is the cytoplasm. It carries out the reaction uroporphyrinogen III + 4 H(+) = coproporphyrinogen III + 4 CO2. Its pathway is porphyrin-containing compound metabolism; protoporphyrin-IX biosynthesis; coproporphyrinogen-III from 5-aminolevulinate: step 4/4. Functionally, catalyzes the decarboxylation of four acetate groups of uroporphyrinogen-III to yield coproporphyrinogen-III. This is Uroporphyrinogen decarboxylase from Brucella melitensis biotype 1 (strain ATCC 23456 / CCUG 17765 / NCTC 10094 / 16M).